A 196-amino-acid chain; its full sequence is Probable malonic semialdehyde reductase RutE (196 aa).

This sequence belongs to the nitroreductase family. HadB/RutE subfamily. FMN is required as a cofactor.

It carries out the reaction 3-hydroxypropanoate + NADP(+) = 3-oxopropanoate + NADPH + H(+). May reduce toxic product malonic semialdehyde to 3-hydroxypropionic acid, which is excreted. The polypeptide is Probable malonic semialdehyde reductase RutE (Escherichia coli O157:H7).